The sequence spans 142 residues: Large ribosomal subunit protein uL13 (142 aa).

The protein belongs to the universal ribosomal protein uL13 family. In terms of assembly, part of the 50S ribosomal subunit.

This protein is one of the early assembly proteins of the 50S ribosomal subunit, although it is not seen to bind rRNA by itself. It is important during the early stages of 50S assembly. This chain is Large ribosomal subunit protein uL13, found in Aeromonas hydrophila subsp. hydrophila (strain ATCC 7966 / DSM 30187 / BCRC 13018 / CCUG 14551 / JCM 1027 / KCTC 2358 / NCIMB 9240 / NCTC 8049).